Consider the following 69-residue polypeptide: DNA gyrase inhibitor YacG (69 aa).

C13, C16, C32, and C36 together coordinate Zn(2+).

This sequence belongs to the DNA gyrase inhibitor YacG family. Interacts with GyrB. It depends on Zn(2+) as a cofactor.

Functionally, inhibits all the catalytic activities of DNA gyrase by preventing its interaction with DNA. Acts by binding directly to the C-terminal domain of GyrB, which probably disrupts DNA binding by the gyrase. The chain is DNA gyrase inhibitor YacG from Neisseria meningitidis serogroup C / serotype 2a (strain ATCC 700532 / DSM 15464 / FAM18).